The following is a 490-amino-acid chain: Protein lag-3 (490 aa).

Disordered regions lie at residues 18-55 (PSVAGMKPSTSKTTHSPPPEEPTAPFVNDNLPNPEDEP), 105-155 (EDEE…PTSE), 213-235 (SSADSIRSVPTPASSMHQPSPAE), 307-362 (SSSE…MQRI), and 391-490 (QQQQ…ANIN). Residues 105 to 119 (EDEERKRVEQQKNKE) show a composition bias toward basic and acidic residues. The segment covering 122–138 (NASTSAPTSSRNGGQSV) has biased composition (polar residues). A compositionally biased stretch (polar residues) spans 307–318 (SSSESPTKQSPM). Low complexity-rich tracts occupy residues 341–359 (QLQQQQNKMRLMQQQQQEM), 391–404 (QQQQQQQMQQHHQM), and 413–456 (QAHQ…HHQM).

As to quaternary structure, component of a complex consisting of at least a lin-12/Notch intracellular domain (NICD), lag-1, and lag-3. Interacts with a NICD of lin-12/Notch or glp-1/Notch; the interactions are direct. In terms of tissue distribution, expressed in the progenitor zone and the early pachytene region of the hermaphrodite gonad.

The protein resides in the nucleus. Functionally, glp-1/Notch and lin-12/Notch proteins promote signaling by recruiting lag-3 to target promoters, where it functions as a transcriptional activator, probably as part of a complex with a Notch intracellular domain (NICD) and the transcription regulator lag-1. Involved in the p53-mediated germ-cell apoptotic response to DNA damage, perhaps acting as a transcriptional activator. May regulate phosphatase lip-1 mRNA transcription downstream of glp-1. This chain is Protein lag-3 (sel-8), found in Caenorhabditis elegans.